Consider the following 1080-residue polypeptide: MHKLLVIIAHIIVCAYADFTGFDNEAGAVENNNDNNINLEYKPPTLRHGAGISCVIRPGDFTHVAISNDFFNRANLPAGFVNVNLEVTDFASSARCKAQLESLAPDDTLTTLITGAANCEIDQGGVTMVVYLKKNPEEIYLKNWRCGYKGSGDYVYKTLALQKTIKGQWGDSTDADSPIHPPLITLAARVETSTETEITLTCQRNNRGVTTTYFTGAPFKTVEFTGAENFRAKGDLYGRDLTPSVVPQCVINTPGDPVFKFKNLGPEDYSSKCYSGFLSTTLPEIKPKFTLLRNPYDVDFNGYEPNDVTMDFDTDSLFLFDRNVNMDRVVIDKHPYMVMKFLKPRNFHETPLLNHVDPNQPKHTFMTSISFTMLNLLLGQQLHKATAIQTVEVIKNSGDSASITCPFDSSVEEYLAIFLLDTSTCSVSLSNRNDVVQYNNSCVDPTNFYLLSSRSTSNDQTFTIDLTGNEACISKYATCIYKKKVPGITNILLLPADFASRDKIPDLSDKDVEDTDNCEEDPGLIKTLERGIRLLTFSDSYSYDYHLDQYNVLTGDGCAQLINPCEYDTTASAMKELGRVASVRVPIRFLNKFPDKKIWQCSMYDTDSDKMSWNEMRDNVACSGTELYKSLITPPKPSVYRSDENNFKISCGIIHRSCINKGINTSAVLSGTEIEDTLLEEGEEFTISQYDLLIKNKVLKCETEWGVGESFISDLLPTNSGCSVSGSCVFIDMNTIRCFYDSKNCYSHNINNVKVVFRINDADVPGANVKLSETNRFEDGFFHFLYPVASIVSIPTKNTIGFKLVDEWQRETDEFTVPYPTVEQWAFILESGIECDYTELSSAVLDVSMGRYTGETTITLQYDMYNFPECKTNENETSVDYYLQIRGEIGTSRARREDEDKSMTEWKNLVYISVHDDGDGVVTWQPISNQRDYNLDIFDNKILAAFRYRLTQEKITELFGPYINSLEVRVITESLDKGVYEATKEYLDQTMAYRTLMIPRIPPQPPITTATTQPPIDVMITTQSPNKPTEDEKSLDLEMIGKIILLIAFVIVFVILLTIGIITLVKRHRETLPEDEYLLP.

Residues 1–17 (MHKLLVIIAHIIVCAYA) form the signal peptide. At 18 to 1042 (DFTGFDNEAG…KSLDLEMIGK (1025 aa)) the chain is on the extracellular side. N-linked (GlcNAc...) asparagine; by host glycosylation is found at asparagine 439, asparagine 664, and asparagine 875. A helical transmembrane segment spans residues 1043–1063 (IILLIAFVIVFVILLTIGIIT). The Cytoplasmic segment spans residues 1064 to 1080 (LVKRHRETLPEDEYLLP).

It is found in the host membrane. This is an uncharacterized protein from Ostreid herpesvirus 1 (isolate France) (OsHV-1).